The primary structure comprises 219 residues: Putative zinc metalloprotease YwhC (219 aa).

Residues 4–24 (FLYYPLSLMPYLVITLIVSFT) form a helical membrane-spanning segment. His-26 contacts Zn(2+). Glu-27 is a catalytic residue. His-30 serves as a coordination point for Zn(2+). 4 consecutive transmembrane segments (helical) span residues 52–72 (PIKH…FGWA), 94–114 (IAGP…LVLM), 132–152 (FFSI…LPLP), and 180–200 (FIVF…WPML).

The protein belongs to the peptidase M50B family. Requires Zn(2+) as cofactor.

Its subcellular location is the cell membrane. The polypeptide is Putative zinc metalloprotease YwhC (ywhC) (Bacillus subtilis (strain 168)).